Here is a 178-residue protein sequence, read N- to C-terminus: MTDINYYVDLLKRNLPKYKKLKVNTLSESEAKEVVAKLLADGFGVELQSGNTFVLKSSSIPPVGVSDNTNKTTAKDNVSDKSSENEVAQPKQVTPPVDATGNTNKTAVTSMRVSIRLPAQVADALLSVYNEPNLSNAIRKAIKDALSAKGISVQFPAPVTTTTAKKSIPSIDEVFRND.

The segment at 64–103 is disordered; the sequence is GVSDNTNKTTAKDNVSDKSSENEVAQPKQVTPPVDATGNT. The segment covering 73–84 has biased composition (basic and acidic residues); that stretch reads TAKDNVSDKSSE.

This is an uncharacterized protein from Acidianus sp. F28 (AFV-2).